Here is a 249-residue protein sequence, read N- to C-terminus: Type I iodothyronine deiodinase (249 aa).

Topologically, residues 1-12 (MGLPRPGLWLKR) are extracellular. Residues 13-33 (LWVLVQVAVEVAVGKVLMTLF) traverse the membrane as a helical; Signal-anchor for type III membrane protein segment. Topologically, residues 34-249 (PERVKQNILA…VRAVLEELHS (216 aa)) are cytoplasmic. Sec-126 is an active-site residue. A non-standard amino acid (selenocysteine) is located at residue Sec-126.

The protein belongs to the iodothyronine deiodinase family. Predominantly monomer. Can form homodimers but homodimerization is not essential for enzyme activity.

It is found in the cell membrane. The protein resides in the endoplasmic reticulum membrane. The protein localises to the basolateral cell membrane. It carries out the reaction 3,3',5-triiodo-L-thyronine + iodide + A + H(+) = L-thyroxine + AH2. The catalysed reaction is 3,3',5'-triiodo-L-thyronine + iodide + A + H(+) = L-thyroxine + AH2. It catalyses the reaction 3,3'-diiodo-L-thyronine + iodide + A + H(+) = 3,3',5'-triiodo-L-thyronine + AH2. The enzyme catalyses 3,3'-diiodo-L-thyronine + iodide + A + H(+) = 3,3',5-triiodo-L-thyronine + AH2. It carries out the reaction 3'-iodo-L-thyronine + iodide + A + H(+) = 3',5'-diiodo-L-thyronine + AH2. The catalysed reaction is 3-iodo-L-thyronine + iodide + A + H(+) = 3,5-diiodo-L-thyronine + AH2. It catalyses the reaction 3-iodo-L-thyronine + iodide + A + H(+) = 3,3'-diiodo-L-thyronine + AH2. The enzyme catalyses 3,3'-diiodothyronamine + iodide + A + H(+) = 3,3',5'-triiodothyronamine + AH2. It carries out the reaction 3'-iodothyronamine + iodide + A + H(+) = 3',5'-diiodothyronamine + AH2. The catalysed reaction is 3-iodothyronamine + iodide + A + H(+) = 3,3'-diiodothyronamine + AH2. It catalyses the reaction 3,3'-diiodothyronamine + iodide + A + H(+) = 3,3',5-triiodothyronamine + AH2. The enzyme catalyses 3-iodothyronamine + iodide + A + H(+) = 3,5-diiodothyronamine + AH2. It carries out the reaction 3,3'-diiodo-L-thyronine sulfate + iodide + A + H(+) = 3,3',5'-triiodo-L-thyronine sulfate + AH2. The catalysed reaction is 3,3',5'-triiodo-L-thyronine sulfate + iodide + A + H(+) = L-thyroxine sulfate + AH2. It catalyses the reaction 3,3'-diiodo-L-thyronine sulfate + iodide + A + H(+) = 3,3',5-triiodo-L-thyronine sulfate + AH2. Plays a crucial role in the metabolism of thyroid hormones (TH) and has specific roles in TH activation and inactivation by deiodination. Catalyzes the deiodination of L-thyroxine (T4) to 3,5,3'-triiodothyronine (T3) via outer-ring deiodination (ORD) and of T4 to 3,3',5'-triiodothyronine (rT3) via inner-ring deiodination (IRD). Catalyzes the deiodiantion of rT3 to 3,3'-diiodothyronine (3,3'-T2) and 3',5'-diiodothyronine (3',5'-T2) to 3'-monoiodothyronine (3'-T1) via ORD. Catalyzes the deiodination of T3 to 3,3'-T2, 3,5-diiodothyronine (3,5-T2) to 3-monoiodothyronine (3-T1) and 3,3'-T2 to 3-T1 via IRD. Catalyzes the phenolic ring deiodinations of 3,3',5'-triiodothyronamine, 3',5'-diiodothyronamine and 3,3'-diiodothyronamine as well as tyrosyl ring deiodinations of 3,5,3'-triiodothyronamine and 3,5-diiodothyronamine. Catalyzes the deiodination of L-thyroxine sulfate and 3,3',5-triiodo-L-thyronine sulfate via IRD and of 3,3',5'-triiodo-L-thyronine sulfate via ORD. This chain is Type I iodothyronine deiodinase (DIO1), found in Oryctolagus cuniculus (Rabbit).